The sequence spans 370 residues: Pantothenate kinase 3 (370 aa).

Glu-138 serves as the catalytic Proton acceptor. Residues Ser-192, Ser-195, and Arg-207 each contribute to the acetyl-CoA site.

It belongs to the type II pantothenate kinase family. As to quaternary structure, homodimer.

It is found in the cytoplasm. It carries out the reaction (R)-pantothenate + ATP = (R)-4'-phosphopantothenate + ADP + H(+). The protein operates within cofactor biosynthesis; coenzyme A biosynthesis; CoA from (R)-pantothenate: step 1/5. With respect to regulation, subject to allosteric regulation, exists in two distinct conformational states, a catalytically incompetent (or open) conformation stabilized by the binding of acetyl(acyl)-CoA, and a catalytically competent (or closed) conformation stabilized by ATP-binding. Inhibited by acetyl-CoA and its thioesters which act as allosteric inhibitors and compete with the ATP-binding site. In terms of biological role, catalyzes the phosphorylation of pantothenate to generate 4'-phosphopantothenate in the first and rate-determining step of coenzyme A (CoA) synthesis. The polypeptide is Pantothenate kinase 3 (PANK3) (Bos taurus (Bovine)).